The primary structure comprises 612 residues: Kelch repeat and BTB domain-containing protein 3 (612 aa).

In terms of domain architecture, BTB spans 52 to 119; that stretch reads YDFKIIMKDE…AYTGKTKITD (68 aa). The region spanning 154-254 is the BACK domain; the sequence is CLQLLSISDS…QLSEETLQDC (101 aa). 5 Kelch repeats span residues 295–341, 343–403, 404–454, 456–506, and 552–599; these read KYIF…SSYG, KIFL…MALD, RLFV…TCQN, IYVL…KAVP, and KIYI…VIQF.

The chain is Kelch repeat and BTB domain-containing protein 3 from Homo sapiens (Human).